The sequence spans 41 residues: Photosystem II reaction center protein Y (41 aa).

A helical transmembrane segment spans residues 7-25; the sequence is VAIVLAPIAVAAGWAAFNI.

It belongs to the PsbY family. As to quaternary structure, PSII is composed of 1 copy each of membrane proteins PsbA, PsbB, PsbC, PsbD, PsbE, PsbF, PsbH, PsbI, PsbJ, PsbK, PsbL, PsbM, PsbT, PsbX, PsbY, PsbZ, Psb30/Ycf12, peripheral proteins PsbO, CyanoQ (PsbQ), PsbU, PsbV and a large number of cofactors. It forms dimeric complexes.

It localises to the cellular thylakoid membrane. Its function is as follows. Loosely associated component of the core of photosystem II (PSII), it is not always seen in crystals. PSII is a light-driven water plastoquinone oxidoreductase, using light energy to abstract electrons from H(2)O, generating a proton gradient subsequently used for ATP formation. This Nostoc sp. (strain PCC 7120 / SAG 25.82 / UTEX 2576) protein is Photosystem II reaction center protein Y.